Here is a 350-residue protein sequence, read N- to C-terminus: tRNA uridine(34) hydroxylase (350 aa).

The region spanning 146 to 240 is the Rhodanese domain; it reads DDPEAVFVDM…YARRAREQGL (95 aa). Cys200 serves as the catalytic Cysteine persulfide intermediate.

Belongs to the TrhO family.

The catalysed reaction is uridine(34) in tRNA + AH2 + O2 = 5-hydroxyuridine(34) in tRNA + A + H2O. Catalyzes oxygen-dependent 5-hydroxyuridine (ho5U) modification at position 34 in tRNAs. This Erwinia tasmaniensis (strain DSM 17950 / CFBP 7177 / CIP 109463 / NCPPB 4357 / Et1/99) protein is tRNA uridine(34) hydroxylase.